Consider the following 596-residue polypeptide: Linalool synthase TPS3, chloroplastic (596 aa).

The transit peptide at 1-39 (MISSLNPLFTTHRSGVIAQQFFASSAAASINSVSSLKIA) directs the protein to the chloroplast. (2E)-geranyl diphosphate-binding residues include Arg-308, Asp-345, Asp-349, Arg-486, and Asn-489. Positions 345 and 349 each coordinate Mg(2+). The short motif at 345 to 349 (DDIYD) is the DDXXD motif element. Mg(2+) contacts are provided by Asn-489, Thr-493, and Ser-497.

This sequence belongs to the terpene synthase family. Tpsb subfamily. Monomer. Requires Mg(2+) as cofactor. The cofactor is Mn(2+). Expressed in flowers and fruits.

The protein resides in the plastid. It is found in the chloroplast. It catalyses the reaction (2E)-geranyl diphosphate = beta-myrcene + diphosphate. The enzyme catalyses (2E)-geranyl diphosphate + H2O = linalool + diphosphate. The catalysed reaction is (2E)-geranyl diphosphate = (Z)-beta-ocimene + diphosphate. It carries out the reaction (2E)-geranyl diphosphate = (E)-beta-ocimene + diphosphate. It participates in secondary metabolite biosynthesis; terpenoid biosynthesis. Monoterpene synthase (mono-TPS) involved in the biosynthesis of monoterpenes natural products, constituent of coffee beverage aroma. Catalyzes the conversion of (2E)-geranyl diphosphate (GPP) into linalool and beta-myrcene, and, as minor products, cis-ocimene and trans-ocimene. Not able to use geranylgeranyl pyrophosphate (GGPP) and farnesyl pyrophosphate (FPP) as substrates. The protein is Linalool synthase TPS3, chloroplastic of Coffea arabica (Arabian coffee).